The sequence spans 147 residues: Myoglobin (147 aa).

The region spanning 2–141 is the Globin domain; it reads ADHDLVLKCW…VIGDIDGYYK (140 aa). His60 serves as a coordination point for nitrite. His60 is a binding site for O2. His89 is a binding site for heme b.

The protein belongs to the globin family. As to quaternary structure, monomeric.

Its subcellular location is the cytoplasm. The protein localises to the sarcoplasm. It catalyses the reaction Fe(III)-heme b-[protein] + nitric oxide + H2O = Fe(II)-heme b-[protein] + nitrite + 2 H(+). It carries out the reaction H2O2 + AH2 = A + 2 H2O. Monomeric heme protein which primary function is to store oxygen and facilitate its diffusion within muscle tissues. Reversibly binds oxygen through a pentacoordinated heme iron and enables its timely and efficient release as needed during periods of heightened demand. Depending on the oxidative conditions of tissues and cells, and in addition to its ability to bind oxygen, it also has a nitrite reductase activity whereby it regulates the production of bioactive nitric oxide. Under stress conditions, like hypoxia and anoxia, it also protects cells against reactive oxygen species thanks to its pseudoperoxidase activity. The chain is Myoglobin (mb) from Danio rerio (Zebrafish).